A 517-amino-acid chain; its full sequence is MDLHLDENLSTMDSLMHHYILIAILVASIIAMVVSSYGREHPLSKVPLVTEKSFWDFTGKKARDNFAANARAVIKQGFAKVGASKPFRIISDQGEMLILPPALAHDIRNVDALSHAEFMKDTTCAEVPGFEPYLESTGTTLLTDMTKTKLMSAMKWLTTPLSNSVAKSCRDLFPEDDEWHEVVLKDKLLDLIARLSSVIFLGEEEIREDPAWLRITKEYTVDSFIASHQLRPYPRYLRPFIARFLPQAQKVQAQLREAEAIITPVIERRRAEKAASTTTVERYDSIEWLEQVAEEKGIKYSPAAMQLTLALSAIHTTTDLLTTTMYEILQHPETIQLLRDEVASVVGDGRLKHSSLYNLKLMDSVIKEAQRLKPVLSINMVRMATEDIDLPDGLNIPRGTRLGVSSHASWDPKVFPNPEKFDPYRFVRLREQPGEENVWQLTTTRPEQIAFGHGQHACPGRFLAANEVKIALCHLLLKYDWELSSITMPTAISHGIMLDSDPTVKVNVRSRQSEVVL.

Asn8 carries N-linked (GlcNAc...) asparagine glycosylation. A helical transmembrane segment spans residues 14 to 34 (SLMHHYILIAILVASIIAMVV). Cys458 is a binding site for heme.

The protein belongs to the cytochrome P450 family. Heme serves as cofactor.

The protein localises to the membrane. Its pathway is secondary metabolite biosynthesis. Cytochrome P450 monooxygenase; part of the gene cluster that mediates the biosynthesis of calbistrin A and related compounds. Calbistrin A is a secondary metabolite with an interesting structure that was recently found to have bioactivity against leukemia cells. It consists of two polyketides linked by an ester bond: a bicyclic decalin containing polyketide and a linear 12 carbon dioic acid structure. The polyketide synthase calA is probably responsible for forming the decalin moiety. Because calA lacks a designated enoylreductase (ER) domain, the required activity is provided by the trans-enoyl reductase calK. Following release from the PKS, calF then probably catalyzes the oxidation and the subsequent Diels Alder cycloisomerization that lead to the formation of the decalin moiety. The decalin polyketide backbone includes two C-methyl groups, at C7 and C11 in backbone, of which the C7 position is probably methylated by the methyltransferase domain of calA. A candidate for adding the methyl group at C11, if not done by CalA, is the cluster methyltransferase calH. Several additional tailoring enzymes within the cluster could be involved in the modification of the decalin polyketide product. Those include the 3 cytochrome P450 monooxygenases CalE, CalG and CalL, of which one might be responsible for the introduction of the extra hydroxyl group attached to the backbone of the decalin moiety, at position C9 in the backbone, that allows for attachment of the linear moiety. One tailoring enzyme activity that is expected to be involved in biosynthesis of calbistrin is an acyltransferase for connecting the two polyketide synthase products, and which could be performed by the cluster acyltransferase calJ. The enzyme responsible for the biosynthesis of the linear moiety, probably a second PKS, has not been identified yet. This is Cytochrome P450 monooxygenase calE from Penicillium decumbens.